A 345-amino-acid polypeptide reads, in one-letter code: Phosphoribosylformylglycinamidine cyclo-ligase (345 aa).

It belongs to the AIR synthase family.

The protein resides in the cytoplasm. The enzyme catalyses 2-formamido-N(1)-(5-O-phospho-beta-D-ribosyl)acetamidine + ATP = 5-amino-1-(5-phospho-beta-D-ribosyl)imidazole + ADP + phosphate + H(+). Its pathway is purine metabolism; IMP biosynthesis via de novo pathway; 5-amino-1-(5-phospho-D-ribosyl)imidazole from N(2)-formyl-N(1)-(5-phospho-D-ribosyl)glycinamide: step 2/2. This Escherichia coli O139:H28 (strain E24377A / ETEC) protein is Phosphoribosylformylglycinamidine cyclo-ligase.